We begin with the raw amino-acid sequence, 902 residues long: HTH-type transcriptional regulator MalT (902 aa).

39-46 (SPAGYGKT) contributes to the ATP binding site. Residues 830-895 (ELIRTSPLTQ…DAVQHAQQLL (66 aa)) enclose the HTH luxR-type domain. The H-T-H motif DNA-binding region spans 854–873 (NEQIAGELAVAATTIKTHIR).

It belongs to the MalT family. In terms of assembly, monomer in solution. Oligomerizes to an active state in the presence of the positive effectors ATP and maltotriose.

Activated by ATP and maltotriose, which are both required for DNA binding. Positively regulates the transcription of the maltose regulon whose gene products are responsible for uptake and catabolism of malto-oligosaccharides. Specifically binds to the promoter region of its target genes, recognizing a short DNA motif called the MalT box. This is HTH-type transcriptional regulator MalT from Salmonella dublin (strain CT_02021853).